The following is a 434-amino-acid chain: Putative MgpC-like protein MPN_149 (434 aa).

Disordered regions lie at residues 168 to 193 (GSGQ…PKAV) and 215 to 267 (EPLD…DNNG). Polar residues predominate over residues 170–184 (GQESSWNSQRSQKVL). Over residues 218–229 (DSTKDGKGKDES) the composition is skewed to basic and acidic residues. Residues 248–267 (STGSQMAAVTDSQQSGDNNG) are compositionally biased toward polar residues.

It belongs to the MgpC family.

In Mycoplasma pneumoniae (strain ATCC 29342 / M129 / Subtype 1) (Mycoplasmoides pneumoniae), this protein is Putative MgpC-like protein MPN_149.